The following is a 129-amino-acid chain: Putative transmembrane protein 10 (129 aa).

3 helical membrane passes run N3–G23, L27–L47, and S85–F105.

It localises to the host membrane. The polypeptide is Putative transmembrane protein 10 (SIFV0010) (Sulfolobus islandicus filamentous virus (isolate Iceland/Hveragerdi) (SIFV)).